The sequence spans 60 residues: Mastoparan-VT5 (60 aa).

The first 27 residues, 1–27, serve as a signal peptide directing secretion; it reads MKNTILILFTAFIALLGFFGMIAEPLA. 4 AXPX repeats span residues 27–30, 31–34, 37–40, and 41–44; these read ADPL, ADPD, and ADPE. Residues 28 to 45 constitute a propeptide that is removed on maturation; the sequence is DPLADPLPDADPDADPET.

This sequence belongs to the MCD family. Mastoparan subfamily. Expressed by the venom gland.

Its subcellular location is the secreted. The synthetic peptide shows weak antimicrobial activities against a few Gram-positive bacteria (only 2 on the 11 strains tested) and the fungus C.albicans. Does not show activity against all the Gram-negative bacteria tested. Exhibits little hemolytic activity against washed human erythrocytes. This is Mastoparan-VT5 from Vespa tropica (Greater banded hornet).